Consider the following 412-residue polypeptide: Phosphoribosylamine--glycine ligase (412 aa).

The region spanning 108 to 309 (KSIMKKYGVP…LAQAIIDILA (202 aa)) is the ATP-grasp domain. 134–190 (LDEKGVPLVIKADGLAAGKGVTVAFDIETAKSALADIFSGSQGKVVIEEFLDGEEFS) is an ATP binding site. 2 residues coordinate Mg(2+): glutamate 279 and asparagine 281.

Belongs to the GARS family. It depends on Mg(2+) as a cofactor. Mn(2+) is required as a cofactor.

It catalyses the reaction 5-phospho-beta-D-ribosylamine + glycine + ATP = N(1)-(5-phospho-beta-D-ribosyl)glycinamide + ADP + phosphate + H(+). Its pathway is purine metabolism; IMP biosynthesis via de novo pathway; N(1)-(5-phospho-D-ribosyl)glycinamide from 5-phospho-alpha-D-ribose 1-diphosphate: step 2/2. The chain is Phosphoribosylamine--glycine ligase from Lactococcus lactis subsp. lactis (strain IL1403) (Streptococcus lactis).